The chain runs to 1902 residues: Putative surface cell antigen sca1 (1902 aa).

The N-terminal stretch at 1-28 (MNKLTEQHLLKKSRFLKYSLLASISVGA) is a signal peptide. Disordered regions lie at residues 140 to 273 (GIEK…TFVP), 420 to 485 (QGVF…SRTA), 707 to 729 (TTTT…YSSS), 858 to 885 (NRRR…AWGN), and 1470 to 1548 (KSES…SDGD). Composition is skewed to polar residues over residues 146-159 (QSQN…TEQM) and 168-197 (TASS…SPEH). Positions 199 to 212 (TTAPGTPSSTPATP) are enriched in low complexity. Residues 225-238 (LGANTPPNINTNSK) show a composition bias toward polar residues. A compositionally biased stretch (low complexity) spans 246–264 (SSSGPQQQAVQSSSQVKSE). The segment covering 423-439 (FNKNKSSGGNARKSSAG) has biased composition (polar residues). Residues 445 to 482 (KKQEAQKQLSEIKKQEKAIKTASDKAKEVAASAKKETS) show a composition bias toward basic and acidic residues. Over residues 863–874 (RDGETSKQRTVD) the composition is skewed to basic and acidic residues. The segment covering 1491-1507 (LSSLPALASSNESALAL) has biased composition (low complexity). Residues 1521–1538 (SSEDEESYDSGFEEEEET) are compositionally biased toward acidic residues. An Autotransporter domain is found at 1618–1902 (ESHIKRGLWM…QGSVKLKVNL (285 aa)).

The protein resides in the cell outer membrane. The polypeptide is Putative surface cell antigen sca1 (sca1) (Rickettsia conorii (strain ATCC VR-613 / Malish 7)).